Here is a 216-residue protein sequence, read N- to C-terminus: Pyrrolidone-carboxylate peptidase (216 aa).

Catalysis depends on residues Glu-80, Cys-143, and His-168.

The protein belongs to the peptidase C15 family. In terms of assembly, homotetramer.

It localises to the cytoplasm. The enzyme catalyses Release of an N-terminal pyroglutamyl group from a polypeptide, the second amino acid generally not being Pro.. Removes 5-oxoproline from various penultimate amino acid residues except L-proline. In Cupriavidus taiwanensis (strain DSM 17343 / BCRC 17206 / CCUG 44338 / CIP 107171 / LMG 19424 / R1) (Ralstonia taiwanensis (strain LMG 19424)), this protein is Pyrrolidone-carboxylate peptidase.